The chain runs to 642 residues: Zinc finger protein 14 (642 aa).

The KRAB domain maps to 4-76 (VSFEDVAVNF…MVERLCESRK (73 aa)). The disordered stretch occupies residues 77 to 99 (GSKCGETTSQMPNVNINKETSTG). The segment covering 81–99 (GETTSQMPNVNINKETSTG) has biased composition (polar residues). Residues 103–125 (HECSFCGKDFMHHSSLNRHMRSH) form a C2H2-type 1 zinc finger. Residues 141-163 (CKRKAVGKTFSYRHCVRKHERTH) form a C2H2-type 2; degenerate zinc finger. The C2H2-type 3 zinc-finger motif lies at 169 to 191 (YECKQCGKAFIYYQPFQRHERIH). The C2H2-type 4; atypical zinc-finger motif lies at 197–217 (YECKQCGKTFIYYQSFQKHAH). C2H2-type zinc fingers lie at residues 223 to 245 (YECK…ERTH), 251 to 273 (YECK…ERTH), 279 to 301 (YKCK…KRTH), 307 to 329 (YECK…VITH), 335 to 357 (YKCK…ERTH), 363 to 385 (YECK…ERTH), 391 to 413 (YECK…ETTH), 419 to 441 (YECK…ERTH), 447 to 469 (YECK…ERSH), 475 to 497 (YECK…ERTH), 503 to 525 (YECK…EKIH), 531 to 553 (FECK…ERTH), 559 to 581 (YQCK…ERTH), 587 to 609 (YRCK…ERSH), and 615 to 637 (YECK…ERTH).

This sequence belongs to the krueppel C2H2-type zinc-finger protein family.

The protein localises to the nucleus. Functionally, may be involved in transcriptional regulation. In Macaca fascicularis (Crab-eating macaque), this protein is Zinc finger protein 14 (ZNF14).